The following is a 456-amino-acid chain: UPF0210 protein Dde_3704 (456 aa).

This sequence belongs to the UPF0210 family. As to quaternary structure, homodimer.

The chain is UPF0210 protein Dde_3704 from Oleidesulfovibrio alaskensis (strain ATCC BAA-1058 / DSM 17464 / G20) (Desulfovibrio alaskensis).